The sequence spans 641 residues: Peroxisomal targeting signal 1 receptor (641 aa).

C12 is covalently cross-linked (Glycyl cysteine thioester (Cys-Gly) (interchain with G-Cter in ubiquitin)). The amphipathic helix 1 (AH1) stretch occupies residues 12–34 (CSEPNALGNFVQHFTNERSYHDK). The interval 74–92 (HLMMDRHLNLRDGPREHKE) is amphipathic helix 2 (AH2). Positions 261-288 (VEAAWDETARRTISDITRPITQINDPKL) are amphipathic helix 4 (AH4). The WxxxF/Y motif signature appears at 331–335 (WTEDY). TPR repeat units follow at residues 359 to 392 (DSDTLERGMGLFNEGHLSDSIIALESEVKRNPEN), 393 to 426 (AMAWMYLGIAHAENDQDSQATTCLIKSLQIDPTN), 427 to 460 (SKARLALAVSHTNDYQKERALDTLEEWLQRTPEY), 503 to 536 (PEVQTALGLLYNMSYDYDKAVDCFKAALQNSPTD), 538 to 570 (QLWNKLGATLANSNRSQEALGAYFKALEHKPSY), and 571 to 604 (VRARSNLGISYLSLNMFQESATTFLGAIAIHPAP).

The protein belongs to the peroxisomal targeting signal receptor family. In terms of assembly, interacts (via WxxxF/Y and LVxEF motifs) with PEX14; promoting translocation through the PEX13-PEX14 docking complex. Interacts with PEX7, promoting peroxisomal import of proteins containing a C-terminal PTS2-type peroxisomal targeting signal. Monoubiquitinated at Cys-12 by PEX2 during PEX5 passage through the retrotranslocation channel. Cys-12 monoubiquitination acts as a recognition signal for the PEX1-PEX6 complex and is required for PEX5 extraction and export from peroxisomes. When PEX5 recycling is compromised, polyubiquitinated by PEX10 during its passage through the retrotranslocation channel, leading to its degradation.

Its subcellular location is the cytoplasm. It is found in the cytosol. The protein resides in the peroxisome matrix. Receptor that mediates peroxisomal import of proteins containing a C-terminal PTS1-type tripeptide peroxisomal targeting signal (SKL-type). Binds to cargo proteins containing a PTS1 peroxisomal targeting signal in the cytosol, and translocates them into the peroxisome matrix by passing through the PEX13-PEX14 docking complex along with cargo proteins. PEX5 receptor is then retrotranslocated into the cytosol, leading to release of bound cargo in the peroxisome matrix, and reset for a subsequent peroxisome import cycle. Its function is as follows. In addition to promoting peroxisomal translocation of proteins containing a PTS1 peroxisomal targeting signal, mediates peroxisomal import of proteins containing a C-terminal PTS2-type peroxisomal targeting signal via its interaction with PEX7. Interaction with PEX7 only takes place when PEX7 is associated with cargo proteins containing a PTS2 peroxisomal targeting signal. PEX7 along with PTS2-containing cargo proteins are then translocated through the PEX13-PEX14 docking complex together with PEX5. This chain is Peroxisomal targeting signal 1 receptor (pex5), found in Dictyostelium discoideum (Social amoeba).